A 256-amino-acid chain; its full sequence is Geranylgeranylglyceryl phosphate synthase (256 aa).

Residues Asp28 and Ser53 each contribute to the Mg(2+) site. Sn-glycerol 1-phosphate contacts are provided by residues 172 to 178 (YLEAGSG), 203 to 204 (GG), and 225 to 226 (GT).

The protein belongs to the GGGP/HepGP synthase family. Group II subfamily. The cofactor is Mg(2+).

The protein localises to the cytoplasm. The catalysed reaction is sn-glycerol 1-phosphate + (2E,6E,10E)-geranylgeranyl diphosphate = sn-3-O-(geranylgeranyl)glycerol 1-phosphate + diphosphate. It participates in membrane lipid metabolism; glycerophospholipid metabolism. Its function is as follows. Prenyltransferase that catalyzes the transfer of the geranylgeranyl moiety of geranylgeranyl diphosphate (GGPP) to the C3 hydroxyl of sn-glycerol-1-phosphate (G1P). This reaction is the first ether-bond-formation step in the biosynthesis of archaeal membrane lipids. The chain is Geranylgeranylglyceryl phosphate synthase from Methanococcus maripaludis (strain C7 / ATCC BAA-1331).